The following is a 260-amino-acid chain: Snake venom serine protease salmobin (260 aa).

The signal sequence occupies residues 1–18 (MVLIKVLANHLILQLSYA). A propeptide spanning residues 19-24 (QKSSEL) is cleaved from the precursor. Residues 25–251 (VIGGDECNIN…YTDWIQSIIA (227 aa)) form the Peptidase S1 domain. 6 disulfide bridges follow: Cys-31/Cys-165, Cys-52/Cys-68, Cys-102/Cys-258, Cys-144/Cys-212, Cys-176/Cys-191, and Cys-202/Cys-227. The active-site Charge relay system is His-67. An N-linked (GlcNAc...) asparagine glycan is attached at Asn-105. The active-site Charge relay system is the Asp-112. N-linked (GlcNAc...) asparagine glycosylation is found at Asn-123 and Asn-156. Ser-206 serves as the catalytic Charge relay system.

This sequence belongs to the peptidase S1 family. Snake venom subfamily. As to quaternary structure, monomer. Expressed by the venom gland.

It localises to the secreted. In terms of biological role, snake venom serine protease that may act in the hemostasis system of the prey. The chain is Snake venom serine protease salmobin from Gloydius halys (Chinese water mocassin).